The primary structure comprises 254 residues: Receptor expression-enhancing protein 2 (254 aa).

2 helical membrane-spanning segments follow: residues 1–21 (MVSW…YPAY) and 35–55 (YVKW…ETLT). Phosphoserine is present on S152. The interval 194–254 (LSLRSSTSQP…KKSSGGGDSA (61 aa)) is disordered. Basic and acidic residues predominate over residues 205-219 (PRTETSEDDLGDKAP).

Belongs to the DP1 family. Interacts with odorant receptor proteins.

It localises to the membrane. In terms of biological role, required for endoplasmic reticulum (ER) network formation, shaping and remodeling. May enhance the cell surface expression of odorant receptors. The chain is Receptor expression-enhancing protein 2 (Reep2) from Mus musculus (Mouse).